Consider the following 90-residue polypeptide: Probable Fe(2+)-trafficking protein (90 aa).

It belongs to the Fe(2+)-trafficking protein family.

Its function is as follows. Could be a mediator in iron transactions between iron acquisition and iron-requiring processes, such as synthesis and/or repair of Fe-S clusters in biosynthetic enzymes. The protein is Probable Fe(2+)-trafficking protein of Photobacterium profundum (strain SS9).